The following is a 1634-amino-acid chain: Phosphatidylinositol 4-phosphate 3-kinase C2 domain-containing subunit beta (1634 aa).

Positions 2 to 298 (SSTQGNGEHW…YASRYGNRKN (297 aa)) are interaction with GRB2. 2 disordered regions span residues 45-188 (EENR…QPSD) and 259-315 (GRGP…VGSR). Residues 87–112 (SDPTLNYNSLSPQEGPPNHSTSQGPQ) show a composition bias toward polar residues. A compositionally biased stretch (low complexity) spans 176–187 (GSPSSSKISQPS). The segment covering 259–270 (GRGPLDFSKDTS) has biased composition (basic and acidic residues). The PI3K-RBD domain maps to 375-463 (EVNLKVTVLC…DIDIRLQLME (89 aa)). The C2 PI3K-type domain maps to 635–786 (VYATHRIPII…DSVILQIDFP (152 aa)). Positions 805–981 (RYEFGSLREE…QYLLAALLCC (177 aa)) constitute a PIK helical domain. Residues 1050-1328 (VPRDCSYFNS…LIESSLGSVA (279 aa)) form the PI3K/PI4K catalytic domain. Residues 1056–1062 (YFNSNAV) are G-loop. The catalytic loop stretch occupies residues 1192–1200 (GICDRHNDN). The interval 1211–1237 (HIDFGRFLGHAQMFGNIKRDRAPFVFT) is activation loop. A PX domain is found at 1365–1481 (GRISDVFLCR…TFFHPLPRDE (117 aa)). The 121-residue stretch at 1504 to 1624 (VGGEVKLSIS…DLAQEKTGWF (121 aa)) folds into the C2 domain.

It belongs to the PI3/PI4-kinase family. In terms of assembly, part of a complex with ERBB2 and EGFR. Part of a complex with phosphorylated EGFR and GRB2. Interacts with phosphorylated EGFR and PDGFR, maybe indirectly. Interacts with GRB2. It depends on Ca(2+) as a cofactor. Requires Mg(2+) as cofactor. The cofactor is Mn(2+). In terms of tissue distribution, expressed in columnar and transitional epithelia, mononuclear cells, and ganglion cells (at protein level). Widely expressed, with highest levels in thymus and placenta and lowest in peripheral blood, skeletal muscle and kidney.

The protein resides in the microsome. The protein localises to the cell membrane. Its subcellular location is the cytoplasm. It is found in the cytosol. It localises to the nucleus. The protein resides in the endoplasmic reticulum. The catalysed reaction is a 1,2-diacyl-sn-glycero-3-phospho-(1D-myo-inositol 4-phosphate) + ATP = a 1,2-diacyl-sn-glycero-3-phospho-(1D-myo-inositol-3,4-bisphosphate) + ADP + H(+). It catalyses the reaction a 1,2-diacyl-sn-glycero-3-phospho-(1D-myo-inositol) + ATP = a 1,2-diacyl-sn-glycero-3-phospho-(1D-myo-inositol-3-phosphate) + ADP + H(+). Its activity is regulated as follows. Activated by GRB2. Phosphorylates PtdIns and PtdIns4P with a preference for PtdIns. Does not phosphorylate PtdIns(4,5)P2. May be involved in EGF and PDGF signaling cascades. This is Phosphatidylinositol 4-phosphate 3-kinase C2 domain-containing subunit beta (PIK3C2B) from Homo sapiens (Human).